Consider the following 358-residue polypeptide: Peptide chain release factor 1 (358 aa).

The residue at position 233 (Gln233) is an N5-methylglutamine.

Belongs to the prokaryotic/mitochondrial release factor family. Post-translationally, methylated by PrmC. Methylation increases the termination efficiency of RF1.

The protein resides in the cytoplasm. Its function is as follows. Peptide chain release factor 1 directs the termination of translation in response to the peptide chain termination codons UAG and UAA. The sequence is that of Peptide chain release factor 1 from Staphylococcus aureus (strain MSSA476).